The primary structure comprises 240 residues: Putative S-adenosylmethionine-dependent methyltransferase RcsF (240 aa).

Residues 5 to 142 (ISPIGHVRSC…YVPYADIVPD (138 aa)) form the TsaA-like domain. Residues 22–24 (PRQ), 63–64 (HQ), arginine 91, and 122–125 (LDGT) each bind S-adenosyl-L-methionine.

The protein belongs to the tRNA methyltransferase O family.

The chain is Putative S-adenosylmethionine-dependent methyltransferase RcsF (rcsF) from Pseudomonas aeruginosa.